Reading from the N-terminus, the 371-residue chain is Rab9 effector protein with kelch motifs (371 aa).

Kelch repeat units follow at residues 47–93 (RVLL…FLSA), 98–144 (RLWV…TSSA), 149–201 (CLYV…AVGT), 202–251 (KLFI…VFKD), 252–301 (HLYI…VIPW), and 348–371 (LLLI…SLIE).

Rab9 effector required for endosome to trans-Golgi network (TGN) transport. This is Rab9 effector protein with kelch motifs (RABEPK) from Gallus gallus (Chicken).